The chain runs to 206 residues: Cytochrome c oxidase subunit 3 (206 aa).

The next 5 membrane-spanning stretches (helical) occupy residues 26–46 (FLGFWFFLGGETILFATFFGT), 68–88 (LVFIMTMLLLTSSLTSVLAMF), 97–117 (AMMIWMWITVVLGLAFLGFEI), 143–163 (LVGLHGAHVAFGLSWIIVLLI), and 185–205 (WHFIDVVWVFIFTVVYLMGVG).

The protein belongs to the cytochrome c oxidase subunit 3 family.

Its subcellular location is the cell membrane. It carries out the reaction 4 Fe(II)-[cytochrome c] + O2 + 8 H(+)(in) = 4 Fe(III)-[cytochrome c] + 2 H2O + 4 H(+)(out). The chain is Cytochrome c oxidase subunit 3 (ctaE) from Alkalihalophilus pseudofirmus (strain ATCC BAA-2126 / JCM 17055 / OF4) (Bacillus pseudofirmus).